Here is a 338-residue protein sequence, read N- to C-terminus: Ketol-acid reductoisomerase (NADP(+)) (338 aa).

The 181-residue stretch at 1-181 (MHVYYDKDCD…GGGRTGIIET (181 aa)) folds into the KARI N-terminal Rossmann domain. NADP(+) is bound by residues 24 to 27 (YGSQ), Arg-47, Ser-50, Thr-52, and 82 to 85 (DEFQ). The active site involves His-107. Gly-133 is an NADP(+) binding site. Positions 182 to 327 (TFKDETETDL…AKLRAMMPWI (146 aa)) constitute a KARI C-terminal knotted domain. Asp-190, Glu-194, Glu-226, and Glu-230 together coordinate Mg(2+). A substrate-binding site is contributed by Ser-251.

Belongs to the ketol-acid reductoisomerase family. Mg(2+) is required as a cofactor.

It carries out the reaction (2R)-2,3-dihydroxy-3-methylbutanoate + NADP(+) = (2S)-2-acetolactate + NADPH + H(+). It catalyses the reaction (2R,3R)-2,3-dihydroxy-3-methylpentanoate + NADP(+) = (S)-2-ethyl-2-hydroxy-3-oxobutanoate + NADPH + H(+). It participates in amino-acid biosynthesis; L-isoleucine biosynthesis; L-isoleucine from 2-oxobutanoate: step 2/4. Its pathway is amino-acid biosynthesis; L-valine biosynthesis; L-valine from pyruvate: step 2/4. Its function is as follows. Involved in the biosynthesis of branched-chain amino acids (BCAA). Catalyzes an alkyl-migration followed by a ketol-acid reduction of (S)-2-acetolactate (S2AL) to yield (R)-2,3-dihydroxy-isovalerate. In the isomerase reaction, S2AL is rearranged via a Mg-dependent methyl migration to produce 3-hydroxy-3-methyl-2-ketobutyrate (HMKB). In the reductase reaction, this 2-ketoacid undergoes a metal-dependent reduction by NADPH to yield (R)-2,3-dihydroxy-isovalerate. This is Ketol-acid reductoisomerase (NADP(+)) from Cellvibrio japonicus (strain Ueda107) (Pseudomonas fluorescens subsp. cellulosa).